We begin with the raw amino-acid sequence, 311 residues long: tRNA dimethylallyltransferase (311 aa).

13–20 (GPTASGKT) is an ATP binding site. 15-20 (TASGKT) serves as a coordination point for substrate. Interaction with substrate tRNA stretches follow at residues 38–41 (DSMQ) and 166–170 (QRVLR).

The protein belongs to the IPP transferase family. Monomer. The cofactor is Mg(2+).

It catalyses the reaction adenosine(37) in tRNA + dimethylallyl diphosphate = N(6)-dimethylallyladenosine(37) in tRNA + diphosphate. Catalyzes the transfer of a dimethylallyl group onto the adenine at position 37 in tRNAs that read codons beginning with uridine, leading to the formation of N6-(dimethylallyl)adenosine (i(6)A). The polypeptide is tRNA dimethylallyltransferase (Staphylococcus aureus (strain Mu3 / ATCC 700698)).